Here is a 572-residue protein sequence, read N- to C-terminus: MCSLSFFFLFLFSTLFFILGIYYLMIDYSLFIEWELFSLNSSMVVMTFIIDWMSLVFMSFVMYISSLVIYYSNDYMHNEKNINRFIMIVLMFILSMAFLIISPNLISILLGWDGLGLVSYCLVIYYQNVKSYNAGMLTALSNRIGDVAILISISWMLNFGSWNYIYYYYFISDSFEMKIITLLIILAAMTKSAQIPFSSWLPAAMAAPTPVSALVHSSTLVTAGVYLLIRFNPMLMVYDFGWYILFIGCLTMFMSGLGANFEFDLKKIIALSTLSQLGLMMSILSMGYSDLAFFHLLTHALFKALLFMCAGSMIHNLRDSQDIRFMGSIIHFMPLTSICFNVSSLCLCGMPFLAGFYSKDLILEIVCLSWVNFFIFFLYFFSTGLTASYSFRLFYYSMSGDNNYYSSYSFNDSSYFISFGMIGLLIVAVFGGSLLSWLIFPVPYLVVLPWYLKFLTLLTIILGSYFGYVISDFVYSYELFSLNFLSFVMFTGSMWFMPFLSTNYVSYLPLSFGYYSLKSFDSGWGELLGGQGLYSFFVYLINYIQSLYDSNFKVYLLTFVFWMFILFVLFFL.

Helical transmembrane passes span 6 to 26 (FFFL…YLMI), 44 to 64 (VVMT…VMYI), 86 to 106 (IMIV…PNLI), 107 to 127 (SILL…IYYQ), 147 to 167 (VAIL…YIYY), 179 to 201 (IITL…SSWL), 208 to 230 (PTPV…LLIR), 234 to 254 (MLMV…TMFM), 268 to 288 (IIAL…SMGY), 291 to 311 (LAFF…MCAG), 337 to 357 (SICF…AGFY), 372 to 394 (NFFI…FRLF), 422 to 442 (IGLL…IFPV), 454 to 474 (FLTL…SDFV), 479 to 499 (LFSL…FMPF), 524 to 544 (WGEL…INYI), and 552 to 572 (FKVY…LFFL).

This sequence belongs to the complex I subunit 5 family.

The protein resides in the mitochondrion inner membrane. The catalysed reaction is a ubiquinone + NADH + 5 H(+)(in) = a ubiquinol + NAD(+) + 4 H(+)(out). In terms of biological role, core subunit of the mitochondrial membrane respiratory chain NADH dehydrogenase (Complex I) that is believed to belong to the minimal assembly required for catalysis. Complex I functions in the transfer of electrons from NADH to the respiratory chain. The immediate electron acceptor for the enzyme is believed to be ubiquinone. The polypeptide is NADH-ubiquinone oxidoreductase chain 5 (ND5) (Locusta migratoria (Migratory locust)).